We begin with the raw amino-acid sequence, 105 residues long: Heat shock protein HspQ (105 aa).

This sequence belongs to the HspQ family.

It localises to the cytoplasm. Functionally, involved in the degradation of certain denaturated proteins, including DnaA, during heat shock stress. The chain is Heat shock protein HspQ from Salmonella choleraesuis (strain SC-B67).